The primary structure comprises 1065 residues: Inversin (1065 aa).

ANK repeat units follow at residues 13–42 (SLASQVHAAAVNGDKGALQRLIVGNSALKD), 47–76 (FGRTPLMYCVLADRLDCADALLKAGADVNK), 80–110 (SQRTALHLAAQKGNYRFMKLLLTRRANWMQK), 113–144 (EEMTPLHLTTRHRSPKCLALLLKFMAPGEVDT), 148–177 (NKQTALHWSAYYNNPEHVKLLIKHDSNIGI), 181–213 (EGKIPLHWAANHKDPSAVHTVRCILDAAPTESL), 220–250 (EGRTPLHFAVADGNVTVVDVLTSYESCNITS), 254–283 (LFRTPLHWAALLGHAQIVHLLLERNKSGTI), 288–317 (QGATPLHYAAQSNFAETVKVFLKHPSVKDD), 321–350 (EGRTSFMWAAGKGSDDVLRTMLSLKSDIDI), 356–385 (YGGTALHAAALSGHVSTVKLLLENNAQVDA), 389–418 (MKHTPLFRACEMGHKDVIQTLIKGGARVDL), 422–451 (DGHSLLHWAALGGNADVCQILIENKINPNV), 455–484 (AGRTPLQCAAYGGYINCMAVLMENNADPNI), 488–517 (EGRTALHWSCNNGYLDAIKLLLDFAAFPNQ), and 523–553 (ERYTPLDYALLGERHEVIQFMLEHGALSIAA). Asn75 is modified (3-hydroxyasparagine). The D-box 1 motif lies at 490 to 498 (RTALHWSCN). Residues 555–584 (QDIAAFKIQAVYKGYKVRKAFRDRKNLLMK) form the IQ 1 domain. The segment covering 589-616 (RKDAAAKKREEENKRKEAEQQKGRRSPD) has biased composition (basic and acidic residues). 2 disordered regions span residues 589–833 (RKDA…TPRN) and 847–886 (HLPQSTEELRSGARRLETSTLSEDFQVSKETDPAPGPLSG). Residues 627-640 (PSTQDVPSRQSRAP) are compositionally biased toward polar residues. Ser661 bears the Phosphoserine mark. Over residues 677 to 686 (SSDLQGTNSR) the composition is skewed to polar residues. 6 stretches are compositionally biased toward basic and acidic residues: residues 687 to 697 (RPNETAREHSK), 706 to 715 (RPNEGSDGSR), 723 to 736 (EKSRGETAGDERCA), 752 to 762 (GPDEKGEDSRR), 770 to 786 (HDSHWKPSRRHDTEPKA), and 853 to 863 (EELRSGARRLE). A D-box 2 motif is present at residues 909 to 917 (RKELFRKKN). Residues 916–945 (KNKAAAVIQRAWRSYQLRKHLSHLRHMKQL) form the IQ 2 domain. The tract at residues 976–999 (TTAVSKAPKSPSKGTSGTKSTKHS) is disordered. The span at 983–994 (PKSPSKGTSGTK) shows a compositional bias: low complexity.

In terms of assembly, binds calmodulin via its IQ domains. Interacts with APC2. Interacts with alpha-, beta-, and gamma-catenin. Interacts with N-cadherin (CDH2). Interacts with microtubules. Interacts with NPHP1. Interacts with DVL1, PRICKLE (PRICKLE1 or PRICKLE2) and Strabismus (VANGL1 or VANGL2). Interacts with IQCB1; the interaction likely requires additional interactors. Component of a complex containing at least ANKS6, INVS, NEK8 and NPHP3. ANKS6 may organize complex assembly by linking INVS and NPHP3 to NEK8 and INVS may target the complex to the proximal ciliary axoneme. Post-translationally, may be ubiquitinated via its interaction with APC2. Hydroxylated at Asn-75, most probably by HIF1AN. In terms of tissue distribution, widely expressed. Strongly expressed in the primary cilia of renal tubular cells.

It is found in the cytoplasm. The protein localises to the cytoskeleton. The protein resides in the spindle. Its subcellular location is the membrane. It localises to the nucleus. It is found in the cell projection. The protein localises to the cilium. Functionally, required for normal renal development and establishment of left-right axis. Probably acts as a molecular switch between different Wnt signaling pathways. Inhibits the canonical Wnt pathway by targeting cytoplasmic disheveled (DVL1) for degradation by the ubiquitin-proteasome. This suggests that it is required in renal development to oppose the repression of terminal differentiation of tubular epithelial cells by Wnt signaling. Involved in the organization of apical junctions in kidney cells together with NPHP1, NPHP4 and RPGRIP1L/NPHP8. Does not seem to be strictly required for ciliogenesis. This Homo sapiens (Human) protein is Inversin (INVS).